Consider the following 429-residue polypeptide: Enolase (429 aa).

Residue glutamine 163 coordinates (2R)-2-phosphoglycerate. Glutamate 205 functions as the Proton donor in the catalytic mechanism. Mg(2+) is bound by residues aspartate 242, glutamate 287, and aspartate 314. Residues lysine 339, arginine 368, serine 369, and lysine 390 each coordinate (2R)-2-phosphoglycerate. Lysine 339 acts as the Proton acceptor in catalysis.

It belongs to the enolase family. The cofactor is Mg(2+).

Its subcellular location is the cytoplasm. The protein resides in the secreted. It is found in the cell surface. The catalysed reaction is (2R)-2-phosphoglycerate = phosphoenolpyruvate + H2O. Its pathway is carbohydrate degradation; glycolysis; pyruvate from D-glyceraldehyde 3-phosphate: step 4/5. In terms of biological role, catalyzes the reversible conversion of 2-phosphoglycerate (2-PG) into phosphoenolpyruvate (PEP). It is essential for the degradation of carbohydrates via glycolysis. This is Enolase from Cupriavidus pinatubonensis (strain JMP 134 / LMG 1197) (Cupriavidus necator (strain JMP 134)).